The sequence spans 125 residues: Calcitonin receptor-stimulating peptide 1 (125 aa).

A signal peptide spans 1–25 (MGFWKFPPFLVLSILVLYQAGMFHA). The propeptide occupies 26–77 (APFRSVFDGRFDPATLDEEESRLLLAAMVNDYEQMRARESEKAQKTEGSRIQ). Cysteine 81 and cysteine 86 are disulfide-bonded.

It belongs to the calcitonin family.

It localises to the secreted. Functionally, stimulates cAMP production in porcine kidney cell line LLC-PK1 via the calcitonin receptor (CT) but not via the CT-like (CL) receptor. This Bos taurus (Bovine) protein is Calcitonin receptor-stimulating peptide 1 (CRSP1).